The chain runs to 125 residues: Small ribosomal subunit protein uS12 (125 aa).

Residues 9-31 are disordered; sequence RQGREVEKIKSKSPAMENSPQRR. Aspartate 89 bears the 3-methylthioaspartic acid mark. The disordered stretch occupies residues 105–125; that stretch reads QGVKDRKQSRSKYGAKRPKAK. Residues 113–125 are compositionally biased toward basic residues; it reads SRSKYGAKRPKAK.

It belongs to the universal ribosomal protein uS12 family. Part of the 30S ribosomal subunit. Contacts proteins S8 and S17. May interact with IF1 in the 30S initiation complex.

Its function is as follows. With S4 and S5 plays an important role in translational accuracy. Interacts with and stabilizes bases of the 16S rRNA that are involved in tRNA selection in the A site and with the mRNA backbone. Located at the interface of the 30S and 50S subunits, it traverses the body of the 30S subunit contacting proteins on the other side and probably holding the rRNA structure together. The combined cluster of proteins S8, S12 and S17 appears to hold together the shoulder and platform of the 30S subunit. This is Small ribosomal subunit protein uS12 from Polaromonas naphthalenivorans (strain CJ2).